Here is a 151-residue protein sequence, read N- to C-terminus: Nucleoside diphosphate kinase (151 aa).

6 residues coordinate ATP: lysine 9, phenylalanine 57, arginine 85, threonine 91, arginine 102, and asparagine 112. The active-site Pros-phosphohistidine intermediate is histidine 115.

This sequence belongs to the NDK family. It depends on Mg(2+) as a cofactor.

The protein resides in the cytoplasm. It carries out the reaction a 2'-deoxyribonucleoside 5'-diphosphate + ATP = a 2'-deoxyribonucleoside 5'-triphosphate + ADP. The catalysed reaction is a ribonucleoside 5'-diphosphate + ATP = a ribonucleoside 5'-triphosphate + ADP. In terms of biological role, major role in the synthesis of nucleoside triphosphates other than ATP. The ATP gamma phosphate is transferred to the NDP beta phosphate via a ping-pong mechanism, using a phosphorylated active-site intermediate. The polypeptide is Nucleoside diphosphate kinase (Archaeoglobus fulgidus (strain ATCC 49558 / DSM 4304 / JCM 9628 / NBRC 100126 / VC-16)).